The primary structure comprises 486 residues: BTB/POZ domain and ankyrin repeat-containing protein BOP (486 aa).

A BTB domain is found at 25 to 115 (SDVTFSVEGR…LYSGQVSIVP (91 aa)). The C2HC NPR-type zinc-finger motif lies at 121–135 (RPNCGERGCWHTHCS). Residues C124, C129, H131, and C134 each coordinate Zn(2+). ANK repeat units follow at residues 257-286 (QKIR…LNLD), 287-316 (EALA…DVNY), 321-350 (AGKT…DPNV), and 354-388 (DNVT…KLRL). Disordered stretches follow at residues 403-442 (EEGN…NHNI) and 464-486 (QMSD…HHDY). Low complexity-rich tracts occupy residues 406 to 418 (NANN…TTTT) and 432 to 442 (SSSSSGNNHNI). A compositionally biased stretch (basic and acidic residues) spans 466-475 (SDDHGGRHGD).

The protein belongs to the plant 'ANKYRIN-BTB/POZ' family. 'NOOT-BOP-COCH-like' (NBCL) subfamily. Homodimer. In terms of tissue distribution, expressed in xylem vessels and parenchyma cells of pedicel vascular tissue in the abscission zone (AZ). Accumulates in developing root nodules and present in roots, especially in the upper part.

The protein localises to the nucleus. It localises to the cytoplasm. It is found in the cell membrane. Its pathway is protein modification; protein ubiquitination. May act as a substrate-specific adapter of an E3 ubiquitin-protein ligase complex (CUL3-RBX1-BTB) which mediates the ubiquitination and subsequent proteasomal degradation of target proteins. Transcriptional co-regulator involved in promoting the fate and determination of leaf and flower meristems. Required for the abscission of senescent organs, probably by regulating the cell wall disorganization in abscission zones (AZs, e.g. pulvini at the base of leaves). Involved in the coordination of the symbiotic nodule developmental program; promotes the formation of root nodules by interacting directly with APP1 to modulate the expression of the nuclear transcription factor Y subunit (NF-YA1), a key nodulin. Necessary for the robust maintenance of nodule identity throughout the nodule developmental program. This is BTB/POZ domain and ankyrin repeat-containing protein BOP from Lupinus luteus (European yellow lupine).